The chain runs to 250 residues: Large ribosomal subunit protein uL29m (250 aa).

The transit peptide at 1 to 24 directs the protein to the mitochondrion; that stretch reads MRPGAASIRTTGSVLAFLVPSAQC. A disordered region spans residues 66-86; sequence VLSKKGSGDQPPKPVPITEKV.

Belongs to the universal ribosomal protein uL29 family. As to quaternary structure, component of the mitochondrial large ribosomal subunit. Mature mitochondrial ribosomes consist of a small (37S) and a large (54S) subunit. The 37S subunit contains at least 33 different proteins and 1 molecule of RNA (15S). The 54S subunit contains at least 45 different proteins and 1 molecule of RNA (21S).

Its subcellular location is the mitochondrion. The protein is Large ribosomal subunit protein uL29m (MRPL4) of Phaeosphaeria nodorum (strain SN15 / ATCC MYA-4574 / FGSC 10173) (Glume blotch fungus).